Consider the following 461-residue polypeptide: tRNA modification GTPase MnmE (461 aa).

(6S)-5-formyl-5,6,7,8-tetrahydrofolate is bound by residues Arg-21, Glu-87, and Lys-126. The region spanning 222–384 (QSTVVLYGEP…LLELLKSKLT (163 aa)) is the TrmE-type G domain. Residue Asn-232 participates in K(+) binding. GTP is bound by residues 232 to 237 (NTGKSS), 251 to 257 (SDVPGTT), and 276 to 279 (DTAG). Ser-236 is a Mg(2+) binding site. Positions 251, 253, and 256 each coordinate K(+). Thr-257 is a binding site for Mg(2+). Lys-461 lines the (6S)-5-formyl-5,6,7,8-tetrahydrofolate pocket.

This sequence belongs to the TRAFAC class TrmE-Era-EngA-EngB-Septin-like GTPase superfamily. TrmE GTPase family. In terms of assembly, homodimer. Heterotetramer of two MnmE and two MnmG subunits. It depends on K(+) as a cofactor.

The protein resides in the cytoplasm. Its function is as follows. Exhibits a very high intrinsic GTPase hydrolysis rate. Involved in the addition of a carboxymethylaminomethyl (cmnm) group at the wobble position (U34) of certain tRNAs, forming tRNA-cmnm(5)s(2)U34. The polypeptide is tRNA modification GTPase MnmE (Leptospira biflexa serovar Patoc (strain Patoc 1 / Ames)).